Reading from the N-terminus, the 172-residue chain is Shikimate kinase (172 aa).

14–19 (GAGKTT) is an ATP binding site. Residue Thr-18 coordinates Mg(2+). Substrate-binding residues include Asp-36, Arg-60, and Gly-82. Residue Arg-119 participates in ATP binding. Arg-137 is a binding site for substrate.

The protein belongs to the shikimate kinase family. As to quaternary structure, monomer. It depends on Mg(2+) as a cofactor.

It localises to the cytoplasm. It carries out the reaction shikimate + ATP = 3-phosphoshikimate + ADP + H(+). The protein operates within metabolic intermediate biosynthesis; chorismate biosynthesis; chorismate from D-erythrose 4-phosphate and phosphoenolpyruvate: step 5/7. Its function is as follows. Catalyzes the specific phosphorylation of the 3-hydroxyl group of shikimic acid using ATP as a cosubstrate. In Thermobifida fusca (strain YX), this protein is Shikimate kinase.